The primary structure comprises 465 residues: MTIHIYNTLTRQKEEFVPLEENKVKMYVCGPTVYNYIHIGNARPPMVFDTVRRYLEYKGYDVQYVSNFTDVDDKLIKAANELGEDVPTIADRFVEAYFEDVTALGCKHATVHPRVTENMDIIIEFIQELVNKGYAYESEGDVYFKTKEFEGYGKLSHQPIADLRHGARIEVGEKKQDPLDFALWKAAKEGEIFWESPWGQGRPGWHIECSAMARKYLGDTIDIHAGGQDLAFPHHENEIAQSEALTGKTFARYWMHNGYININNEKMSKSLGNFILVHDIIKQYDPQLIRFFMLSVHYRHPINFSEELLQSTNNGLERIKTAYGNLKHRMESSTDLTDHNEKWLAEIEKFQTAFEEAMNDDFNTANAITELYNVANHANQYLLEEHTSKVVIEAYVKQLETLFDILGLELSKEELLDEEIEELIQKRIEARKNRDFALSDQIRDDLKERNIILEDTAQGTRWKRG.

A Zn(2+)-binding site is contributed by cysteine 29. The 'HIGH' region motif lies at 31-41 (PTVYNYIHIGN). Zn(2+) is bound by residues cysteine 209, histidine 234, and glutamate 238. A 'KMSKS' region motif is present at residues 266 to 270 (KMSKS). Position 269 (lysine 269) interacts with ATP. Serine 270 is modified (phosphoserine).

This sequence belongs to the class-I aminoacyl-tRNA synthetase family. In terms of assembly, monomer. Zn(2+) is required as a cofactor.

It localises to the cytoplasm. It carries out the reaction tRNA(Cys) + L-cysteine + ATP = L-cysteinyl-tRNA(Cys) + AMP + diphosphate. In Bacillus cereus (strain B4264), this protein is Cysteine--tRNA ligase.